We begin with the raw amino-acid sequence, 327 residues long: MAKIYTDKDASLEPLRGKTIAVIGYGIQGRAQALNLRDSGLKVIVGLRKGGNSWNVAASEGFEVYEVGEAVSRADVVMVLIPDMEQPKVWQSQIAPHLREGAVVDFAHGFNIHYGLIKPPKNVDVVMVAPKAPGRAVREEFLAGRGVPALVAVHQNYSGSALKYALAIAKGIGATRAGVIETTFAEETETDLIGEQTVLVGGLMELIKRGFEVLVEMGYQPEVAYFEVLNEAKLIMDLIWQRGIYGMLNGVSDTAKYGGLTVGPKIIDEEVKSKMKAAALRVKSGEFAKEWVEEYARGSPNLKRLMESVKEHPIEKVGAEMRKLLFG.

Positions 2 to 182 (AKIYTDKDAS…GATRAGVIET (181 aa)) constitute a KARI N-terminal Rossmann domain. NADP(+)-binding positions include 25–28 (YGIQ), Arg48, Ser53, and 83–86 (DMEQ). Residue His108 is part of the active site. An NADP(+)-binding site is contributed by Gly134. The region spanning 183–327 (TFAEETETDL…GAEMRKLLFG (145 aa)) is the KARI C-terminal knotted domain. 4 residues coordinate Mg(2+): Asp191, Glu195, Glu227, and Glu231. Ser252 is a substrate binding site.

This sequence belongs to the ketol-acid reductoisomerase family. Mg(2+) is required as a cofactor.

The enzyme catalyses (2R)-2,3-dihydroxy-3-methylbutanoate + NADP(+) = (2S)-2-acetolactate + NADPH + H(+). The catalysed reaction is (2R,3R)-2,3-dihydroxy-3-methylpentanoate + NADP(+) = (S)-2-ethyl-2-hydroxy-3-oxobutanoate + NADPH + H(+). It participates in amino-acid biosynthesis; L-isoleucine biosynthesis; L-isoleucine from 2-oxobutanoate: step 2/4. It functions in the pathway amino-acid biosynthesis; L-valine biosynthesis; L-valine from pyruvate: step 2/4. Involved in the biosynthesis of branched-chain amino acids (BCAA). Catalyzes an alkyl-migration followed by a ketol-acid reduction of (S)-2-acetolactate (S2AL) to yield (R)-2,3-dihydroxy-isovalerate. In the isomerase reaction, S2AL is rearranged via a Mg-dependent methyl migration to produce 3-hydroxy-3-methyl-2-ketobutyrate (HMKB). In the reductase reaction, this 2-ketoacid undergoes a metal-dependent reduction by NADPH to yield (R)-2,3-dihydroxy-isovalerate. This is Ketol-acid reductoisomerase (NADP(+)) from Pyrobaculum neutrophilum (strain DSM 2338 / JCM 9278 / NBRC 100436 / V24Sta) (Thermoproteus neutrophilus).